Consider the following 358-residue polypeptide: G-protein coupled receptor 62 (358 aa).

Residues 1–17 (MANGSGLSVTELAGSVG) lie on the Extracellular side of the membrane. N-linked (GlcNAc...) asparagine glycosylation occurs at N3. Residues 18-38 (FILAVLVEVGAVLGNGTLLVV) traverse the membrane as a helical segment. The Cytoplasmic portion of the chain corresponds to 39–53 (VLRTPDLQDAFYLAH). Residues 54–74 (LCVVDLLAAASIMPLGLLAAP) form a helical membrane-spanning segment. At 75–89 (PGLGTVPLDPSSCRA) the chain is on the extracellular side. A helical transmembrane segment spans residues 90 to 110 (ARFLSAALLPACTLGVAALGL). Over 111 to 128 (ARYRLIVHPLRPGARPAP) the chain is Cytoplasmic. The helical transmembrane segment at 129-149 (ALVLTAVWSAAALLGALSLLG) threads the bilayer. The Extracellular segment spans residues 150 to 176 (PPPAPPPAPARCSVLAGGLGPFRPLWA). Residues 177-197 (MLAFALPALLLLAAYGSIFLV) form a helical membrane-spanning segment. At 198-234 (ARRAALRPPRGTRPRSDSLDSRLSFLPPLRPRLLGGK) the chain is on the cytoplasmic side. The chain crosses the membrane as a helical span at residues 235–255 (AALAPALAVGQFAACWLPYGC). Residues 256–268 (ACLAPAARAAAAE) lie on the Extracellular side of the membrane. Residues 269 to 289 (ATVTWVAYSAFAAHPFLYGLL) form a helical membrane-spanning segment. Residues 290–358 (QRPVRLALGR…RQTPSVSEAT (69 aa)) lie on the Cytoplasmic side of the membrane. The interval 334–358 (VLGPSEAPEQARELARQTPSVSEAT) is disordered.

Belongs to the G-protein coupled receptor 1 family. In terms of assembly, homodimer. Forms heterodimer with MTNR1B. Interacts with ARRB1 and ARRB2 in a spontaneous and agonist-independent manner; leading to the internalization of GPR62 in the endosomal compartment. In terms of tissue distribution, expressed in the brain and testes. Expressed widely, in the brain, including the cerebral cortex, cerebellum, hippocampus,thalamus and pituitary gland. In the testes, expressed specifically in the germ cells.

Its subcellular location is the cell membrane. The protein resides in the endosome membrane. Functionally, orphan G-protein coupled receptor. Constitutively activates the G(q/11)/inositol phosphate and the G(s)-alpha/cAMP signaling pathways. Has spontaneous activity for beta-arrestin recruitment. Shows a reciprocal regulatory interaction with the melatonin receptor MTNR1B most likely through receptor heteromerization. The polypeptide is G-protein coupled receptor 62 (Gpr62) (Mus musculus (Mouse)).